We begin with the raw amino-acid sequence, 292 residues long: D-galactarolactone isomerase (292 aa).

It belongs to the metallo-dependent hydrolases superfamily. Does not require a metal cofactor. is required as a cofactor.

The enzyme catalyses D-galactaro-1,5-lactone = D-galactaro-1,4-lactone. It participates in carbohydrate acid metabolism; D-galacturonate degradation via prokaryotic oxidative pathway. Catalyzes the isomerization of D-galactaro-1,5-lactone to D-galactaro-1,4-lactone. This is a step in the oxidative degradation pathway of D-galacturonate, which allows A.tumefaciens to utilize D-galacturonate as a sole carbon source. The polypeptide is D-galactarolactone isomerase (Agrobacterium fabrum (strain C58 / ATCC 33970) (Agrobacterium tumefaciens (strain C58))).